Consider the following 424-residue polypeptide: Enolase (424 aa).

Residue Gln162 coordinates (2R)-2-phosphoglycerate. Glu204 (proton donor) is an active-site residue. Asp241, Glu284, and Asp311 together coordinate Mg(2+). (2R)-2-phosphoglycerate is bound by residues Lys336, Arg365, Ser366, and Lys387. The active-site Proton acceptor is the Lys336.

It belongs to the enolase family. Mg(2+) is required as a cofactor.

It is found in the cytoplasm. It localises to the secreted. The protein localises to the cell surface. It carries out the reaction (2R)-2-phosphoglycerate = phosphoenolpyruvate + H2O. The protein operates within carbohydrate degradation; glycolysis; pyruvate from D-glyceraldehyde 3-phosphate: step 4/5. Its function is as follows. Catalyzes the reversible conversion of 2-phosphoglycerate (2-PG) into phosphoenolpyruvate (PEP). It is essential for the degradation of carbohydrates via glycolysis. This Mesorhizobium japonicum (strain LMG 29417 / CECT 9101 / MAFF 303099) (Mesorhizobium loti (strain MAFF 303099)) protein is Enolase.